Here is a 130-residue protein sequence, read N- to C-terminus: Small ribosomal subunit protein uS9 (130 aa).

This sequence belongs to the universal ribosomal protein uS9 family.

This is Small ribosomal subunit protein uS9 from Burkholderia vietnamiensis (strain G4 / LMG 22486) (Burkholderia cepacia (strain R1808)).